Reading from the N-terminus, the 439-residue chain is Type I secretion system membrane fusion protein PrsE (439 aa).

The helical transmembrane segment at L20–T40 threads the bilayer.

The protein belongs to the membrane fusion protein (MFP) (TC 8.A.1) family. As to quaternary structure, part of a type I secretion system composed of PrsD and PrsE.

It localises to the cell inner membrane. Mediates secretion of glycanase ExsH. This is Type I secretion system membrane fusion protein PrsE (prsE) from Rhizobium meliloti (strain 1021) (Ensifer meliloti).